Consider the following 421-residue polypeptide: Indole-3-pyruvate monooxygenase YUCCA8 (421 aa).

30–35 (GAGPSG) is a binding site for FAD. 201 to 206 (GCGNSG) provides a ligand contact to NADP(+).

Belongs to the FMO family. It depends on FAD as a cofactor. Expressed in organs undergoing active growth and cell division.

The protein localises to the endoplasmic reticulum. It catalyses the reaction indole-3-pyruvate + NADPH + O2 + H(+) = (indol-3-yl)acetate + CO2 + NADP(+) + H2O. Functionally, involved in auxin biosynthesis. Converts the indole-3-pyruvic acid (IPA) produced by the TAA family to indole-3-acetic acid (IAA). Seems not able to use tryptamine (TAM) as substrate. Probably responsible for auxin biosynthesis in leaves and involved in the regulation of lateral leaf growth. Required for maintaining water homeostasis and an appropriate root to shoot ratio. Required for the inhibition of root growth by ethylene in etiolated seedlings. Functions downstream of the ethylene-response transcription factor EIL1. The chain is Indole-3-pyruvate monooxygenase YUCCA8 from Oryza sativa subsp. indica (Rice).